Here is a 207-residue protein sequence, read N- to C-terminus: Large ribosomal subunit protein bL25 (207 aa).

A disordered region spans residues 171–207; sequence EEETVVTVSAPRAEEEPTTTEAPEPEAVHGKDEEPVE. Residues 196–207 are compositionally biased toward basic and acidic residues; that stretch reads EAVHGKDEEPVE.

Belongs to the bacterial ribosomal protein bL25 family. CTC subfamily. Part of the 50S ribosomal subunit; part of the 5S rRNA/L5/L18/L25 subcomplex. Contacts the 5S rRNA. Binds to the 5S rRNA independently of L5 and L18.

In terms of biological role, this is one of the proteins that binds to the 5S RNA in the ribosome where it forms part of the central protuberance. This is Large ribosomal subunit protein bL25 from Listeria monocytogenes serotype 4b (strain F2365).